The sequence spans 351 residues: Biotin synthase (351 aa).

Residues 58–285 enclose the Radical SAM core domain; the sequence is NTVQLSTLLS…RAMVRLSAGR (228 aa). The [4Fe-4S] cluster site is built by C73, C77, and C80. [2Fe-2S] cluster contacts are provided by C117, C148, C208, and R280.

The protein belongs to the radical SAM superfamily. Biotin synthase family. In terms of assembly, homodimer. [4Fe-4S] cluster is required as a cofactor. [2Fe-2S] cluster serves as cofactor.

It carries out the reaction (4R,5S)-dethiobiotin + (sulfur carrier)-SH + 2 reduced [2Fe-2S]-[ferredoxin] + 2 S-adenosyl-L-methionine = (sulfur carrier)-H + biotin + 2 5'-deoxyadenosine + 2 L-methionine + 2 oxidized [2Fe-2S]-[ferredoxin]. It participates in cofactor biosynthesis; biotin biosynthesis; biotin from 7,8-diaminononanoate: step 2/2. Functionally, catalyzes the conversion of dethiobiotin (DTB) to biotin by the insertion of a sulfur atom into dethiobiotin via a radical-based mechanism. The protein is Biotin synthase of Paraburkholderia phymatum (strain DSM 17167 / CIP 108236 / LMG 21445 / STM815) (Burkholderia phymatum).